Reading from the N-terminus, the 334-residue chain is Beta-1,3-N-acetylglucosaminyltransferase radical fringe (334 aa).

Topologically, residues 1–6 (MSRVRR) are cytoplasmic. A helical; Signal-anchor for type II membrane protein transmembrane segment spans residues 7–29 (VLCRACLALAAVLAVLLLLPLPL). Over 30 to 334 (PLPLPLPRAP…MKNRGKEAFQ (305 aa)) the chain is Lumenal. Substrate is bound at residue Arg-77. An N-linked (GlcNAc...) asparagine glycan is attached at Asn-116. 2 cysteine pairs are disulfide-bonded: Cys-117/Cys-128 and Cys-146/Cys-210. Asp-150 contributes to the substrate binding site. A Mn(2+)-binding site is contributed by Asp-151. Residue Asp-240 is part of the active site. Residue His-264 participates in Mn(2+) binding. The cysteines at positions 314 and 323 are disulfide-linked.

The protein belongs to the glycosyltransferase 31 family. Mn(2+) serves as cofactor. Most abundantly expressed in adult brain. Expressed in most neurons of the brain but not in glial cells. Also detected to a lower extent in adult lung and kidney.

It localises to the golgi apparatus membrane. It carries out the reaction 3-O-(alpha-L-fucosyl)-L-threonyl-[EGF-like domain protein] + UDP-N-acetyl-alpha-D-glucosamine = 3-O-(N-acetyl-beta-D-glucosaminyl-(1-&gt;3)-alpha-L-fucosyl)-L-threonyl-[EGF-like domain protein] + UDP + H(+). It catalyses the reaction 3-O-(alpha-L-fucosyl)-L-seryl-[EGF-like domain protein] + UDP-N-acetyl-alpha-D-glucosamine = 3-O-(N-acetyl-beta-D-glucosaminyl-(1-&gt;3)-alpha-L-fucosyl)-L-seryl-[EGF-like domain protein] + UDP + H(+). Functionally, glycosyltransferase that initiates the elongation of O-linked fucose residues attached to EGF-like repeats in the extracellular domain of Notch molecules. Modulates NOTCH1 activity by modifying O-fucose residues at specific EGF-like domains resulting in enhancement of NOTCH1 activation by DLL1 and JAG1. Inhibits Notch signaling in postmitotic neurons of the brain. It may play a role in adult brain and in neurogenesis. It may play a role in limb development. The polypeptide is Beta-1,3-N-acetylglucosaminyltransferase radical fringe (Rattus norvegicus (Rat)).